A 187-amino-acid chain; its full sequence is Elongation factor P (187 aa).

The protein belongs to the elongation factor P family.

The protein localises to the cytoplasm. The protein operates within protein biosynthesis; polypeptide chain elongation. Functionally, involved in peptide bond synthesis. Stimulates efficient translation and peptide-bond synthesis on native or reconstituted 70S ribosomes in vitro. Probably functions indirectly by altering the affinity of the ribosome for aminoacyl-tRNA, thus increasing their reactivity as acceptors for peptidyl transferase. The sequence is that of Elongation factor P from Gloeobacter violaceus (strain ATCC 29082 / PCC 7421).